The following is a 244-amino-acid chain: Large ribosomal subunit protein uL3 (244 aa).

Residues 215 to 244 (KKPPRERRGFAGSSTVDPLKASKRAVAKKK) form a disordered region. The span at 235-244 (ASKRAVAKKK) shows a compositional bias: basic residues.

Belongs to the universal ribosomal protein uL3 family. As to quaternary structure, part of the 50S ribosomal subunit. Forms a cluster with proteins L14 and L19.

Its function is as follows. One of the primary rRNA binding proteins, it binds directly near the 3'-end of the 23S rRNA, where it nucleates assembly of the 50S subunit. The chain is Large ribosomal subunit protein uL3 from Koribacter versatilis (strain Ellin345).